The sequence spans 138 residues: Acidic phospholipase A2 VpaPLA2 (138 aa).

Positions 1–16 (MRTLWIVAVCLMGVEG) are cleaved as a signal peptide. Cystine bridges form between Cys-42/Cys-131, Cys-44/Cys-60, Cys-59/Cys-111, Cys-65/Cys-138, Cys-66/Cys-104, Cys-73/Cys-97, and Cys-91/Cys-102. Residues Tyr-43, Gly-45, and Gly-47 each contribute to the Ca(2+) site. His-63 is a catalytic residue. Asp-64 contributes to the Ca(2+) binding site. The active site involves Asp-105.

Belongs to the phospholipase A2 family. Group II subfamily. D49 sub-subfamily. Requires Ca(2+) as cofactor. Expressed by the venom gland.

It localises to the secreted. The enzyme catalyses a 1,2-diacyl-sn-glycero-3-phosphocholine + H2O = a 1-acyl-sn-glycero-3-phosphocholine + a fatty acid + H(+). Snake venom phospholipase A2 (PLA2) that causes a sudden decrease of arterial blood pressure when injected into rat, but is not lethal. When co-injected with an uncharacterized basic protein (which did not show any enzymatic activity, but also causes a drop in blood pressure), this synergistical mixture is lethal. PLA2 catalyzes the calcium-dependent hydrolysis of the 2-acyl groups in 3-sn-phosphoglycerides. This is Acidic phospholipase A2 VpaPLA2 from Daboia palaestinae (Palestine viper).